Consider the following 153-residue polypeptide: MHHRFTPPMMSCKDTAIQLLSRRDHGQYELRQKLTVKGYASQDIESAMHFCLEHGYLDDLRYAKSQIRQHVGKGHGERRIRQELSLKQVSDSVVENAFAEEPQDWFELAKSVAMKKFNGVKAKEQKEYAKQVRFLQYRGFSFEQIRYALSDEA.

Belongs to the RecX family.

It is found in the cytoplasm. Its function is as follows. Modulates RecA activity. This Vibrio vulnificus (strain CMCP6) protein is Regulatory protein RecX.